We begin with the raw amino-acid sequence, 133 residues long: Small ribosomal subunit protein uS8 (133 aa).

This sequence belongs to the universal ribosomal protein uS8 family. In terms of assembly, part of the 30S ribosomal subunit. Contacts proteins S5 and S12.

Functionally, one of the primary rRNA binding proteins, it binds directly to 16S rRNA central domain where it helps coordinate assembly of the platform of the 30S subunit. The protein is Small ribosomal subunit protein uS8 of Prochlorococcus marinus (strain MIT 9301).